The primary structure comprises 68 residues: Protein SlyX homolog (68 aa).

This sequence belongs to the SlyX family.

The protein is Protein SlyX homolog of Pseudomonas putida (strain ATCC 700007 / DSM 6899 / JCM 31910 / BCRC 17059 / LMG 24140 / F1).